Here is a 760-residue protein sequence, read N- to C-terminus: Endoplasmin homolog (760 aa).

The N-terminal stretch at 1-23 is a signal peptide; sequence MRFLLVGFVALLAVSAFIPNVYA. Residues Asn95, Asp137, Asn150, and Phe187 each contribute to the ATP site. An N-linked (GlcNAc...) asparagine glycan is attached at Asn95. Asn423 carries N-linked (GlcNAc...) asparagine glycosylation. The tract at residues 727-760 is disordered; it reads SQDAQVETEQHIEEAEPEPEAAEETTIEEEHSEL. Over residues 741–760 the composition is skewed to acidic residues; sequence AEPEPEAAEETTIEEEHSEL. Residues 757–760 carry the Prevents secretion from ER motif; sequence HSEL.

It belongs to the heat shock protein 90 family.

It localises to the endoplasmic reticulum lumen. Its function is as follows. Molecular chaperone that functions in the processing and transport of secreted proteins. This Caenorhabditis elegans protein is Endoplasmin homolog.